A 464-amino-acid chain; its full sequence is Dihydrolipoyl dehydrogenase (464 aa).

Residues 33–41 (EPKYWGGVC), Lys50, and Gly113 contribute to the FAD site. A disulfide bond links Cys41 and Cys46. NAD(+) contacts are provided by residues 178 to 182 (GAGAI), Glu201, and 266 to 269 (AIGF). Residues Asp309 and Ala317 each contribute to the FAD site. His443 (proton acceptor) is an active-site residue.

It belongs to the class-I pyridine nucleotide-disulfide oxidoreductase family. As to quaternary structure, homodimer. Part of the PDH complex, consisting of multiple copies of AceE (E1), DlaT (E2) and Lpd (E3), and of the BCKADH complex, consisting of multiple copies of BkdA/BkdB (E1), BkdC (E2) and Lpd (E3). The cofactor is FAD.

It is found in the cytoplasm. The catalysed reaction is N(6)-[(R)-dihydrolipoyl]-L-lysyl-[protein] + NAD(+) = N(6)-[(R)-lipoyl]-L-lysyl-[protein] + NADH + H(+). Its function is as follows. Lipoamide dehydrogenase is a component of the alpha-ketoacid dehydrogenase complexes. Catalyzes the reoxidation of dihydrolipoyl groups which are covalently attached to the lipoate acyltransferase components (E2) of the complexes. The protein is Dihydrolipoyl dehydrogenase (lpd) of Mycobacterium bovis (strain ATCC BAA-935 / AF2122/97).